Here is a 560-residue protein sequence, read N- to C-terminus: Embryonal Fyn-associated substrate (560 aa).

Residues 5 to 68 (TSAQLARALY…PANRVKLLPA (64 aa)) enclose the SH3 domain. Disordered stretches follow at residues 176–219 (VVPQ…LYAA) and 241–372 (ANGE…NEYE). A compositionally biased stretch (basic and acidic residues) spans 198 to 210 (AELERDPEWEGGR). Tyrosine 253 bears the Phosphotyrosine; by SRC mark. Residues 259–268 (GPEPPSPEPP) show a composition bias toward pro residues. 2 short sequence motifs (SH3-binding) span residues 304 to 310 (RPLPALP) and 334 to 340 (RPLPPPP). A compositionally biased stretch (low complexity) spans 305 to 315 (PLPALPVSEAP). Residues 351-361 (PEGDPECREVA) are compositionally biased toward basic and acidic residues. The segment at 437-487 (FYAGQCQSHYSALQAAVAALVASTQANQPPCLFVPHGKRVVVAAHRLVFVG) is divergent helix-loop-helix motif.

The protein belongs to the CAS family. Post-translationally, phosphorylated on multiple tyrosine residues. Phosphorylated on tyrosines by FYN and SRC. As to expression, widely expressed. Higher levels found in placenta and embryo. Lower levels found in brain, brainstem, muscle and lung. No expression in liver and intestine.

Its function is as follows. Docking protein which plays a central coordinating role for tyrosine-kinase-based signaling related to cell adhesion. May serve as an activator of SRC and a downstream effector. Interacts with the SH3 domain of FYN and with CRK, SRC, and YES. The chain is Embryonal Fyn-associated substrate (Efs) from Mus musculus (Mouse).